We begin with the raw amino-acid sequence, 350 residues long: 3-dehydroquinate synthase (350 aa).

NAD(+) contacts are provided by residues 106–110 (GVIGD), 130–131 (TS), Lys143, and Lys152. Zn(2+)-binding residues include Glu185, His246, and His263.

This sequence belongs to the sugar phosphate cyclases superfamily. Dehydroquinate synthase family. Co(2+) serves as cofactor. The cofactor is Zn(2+). Requires NAD(+) as cofactor.

Its subcellular location is the cytoplasm. The catalysed reaction is 7-phospho-2-dehydro-3-deoxy-D-arabino-heptonate = 3-dehydroquinate + phosphate. The protein operates within metabolic intermediate biosynthesis; chorismate biosynthesis; chorismate from D-erythrose 4-phosphate and phosphoenolpyruvate: step 2/7. Functionally, catalyzes the conversion of 3-deoxy-D-arabino-heptulosonate 7-phosphate (DAHP) to dehydroquinate (DHQ). The polypeptide is 3-dehydroquinate synthase (Clostridium botulinum (strain Alaska E43 / Type E3)).